Here is a 181-residue protein sequence, read N- to C-terminus: Cell division protein SepF (181 aa).

Residues 18–27 are compositionally biased toward acidic residues; that stretch reads EDYLDDDDYD. The interval 18–42 is disordered; that stretch reads EDYLDDDDYDDGRAVGHDDRRAMHE. Residues 28–42 are compositionally biased toward basic and acidic residues; sequence DGRAVGHDDRRAMHE.

The protein belongs to the SepF family. Homodimer. Interacts with FtsZ.

The protein localises to the cytoplasm. Functionally, cell division protein that is part of the divisome complex and is recruited early to the Z-ring. Probably stimulates Z-ring formation, perhaps through the cross-linking of FtsZ protofilaments. Its function overlaps with FtsA. This is Cell division protein SepF from Frankia alni (strain DSM 45986 / CECT 9034 / ACN14a).